A 1719-amino-acid polypeptide reads, in one-letter code: Serine/threonine-protein kinase MRCK alpha (1719 aa).

Positions 77-343 (FEILKVIGRG…IEDFKKHPFF (267 aa)) constitute a Protein kinase domain. ATP-binding positions include 83–91 (IGRGAFGEV) and K106. D201 (proton acceptor) is an active-site residue. A phosphoserine; by autocatalysis mark is found at S222 and S234. A Phosphothreonine; by autocatalysis modification is found at T240. An AGC-kinase C-terminal domain is found at 344 to 414 (SGIDWDNIRN…TSSCVLSDRS (71 aa)). Coiled coils occupy residues 437 to 670 (NNLA…KQKQ), 713 to 820 (SEIK…WEAQ), and 880 to 943 (LELQ…SEKG). A Phorbol-ester/DAG-type zinc finger spans residues 999–1049 (THQFFVKSFTAPTKCHQCTSLMVGLIRQGCSCEVCGFSCHITCVNKAPTVC). One can recognise a PH domain in the interval 1069-1188 (GTAYEGHVRI…WVGVLSELHK (120 aa)). In terms of domain architecture, CNH spans 1214 to 1486 (IKTTQAAAII…RPLNTEGSLN (273 aa)). At S1532 the chain carries Phosphoserine. The 14-residue stretch at 1558–1571 (ISNPTNFNHIAHMG) folds into the CRIB domain. The segment at 1579 to 1719 (LKDLPMNPRP…ESTDRGSWDP (141 aa)) is disordered. Over residues 1591–1606 (SRTVFSGSVSIPSITK) the composition is skewed to polar residues. Phosphoserine occurs at positions 1598, 1600, 1616, 1638, 1651, 1656, 1680, 1706, and 1708. Positions 1612-1627 (GRSMSASSGLSARSSA) are enriched in low complexity. Low complexity predominate over residues 1652-1661 (PSEGSLSSGG).

It belongs to the protein kinase superfamily. AGC Ser/Thr protein kinase family. DMPK subfamily. Homodimer and homotetramer via the coiled coil regions. Interacts tightly with GTP-bound but not GDP-bound CDC42. Forms a tripartite complex with MYO18A and LRP35A with the latter acting as an adapter connecting CDC42BPA and MYO18A. LRP35A binding results in activation of CDC42BPA by abolition of its negative autoregulation. Interacts with LURAP1. Interacts (via AGC-kinase C-terminal domain) with FAM89B/LRAP25 (via LRR repeat). Forms a tripartite complex with FAM89B/LRAP25 and LIMK1. The cofactor is Mg(2+). Proteolytically cleaved by caspases upon apoptosis induction. The cleavage at Asp-478 by CASP3 increases its kinase activity (in vitro).

It localises to the cytoplasm. The protein resides in the cell projection. The protein localises to the lamellipodium. The catalysed reaction is L-seryl-[protein] + ATP = O-phospho-L-seryl-[protein] + ADP + H(+). The enzyme catalyses L-threonyl-[protein] + ATP = O-phospho-L-threonyl-[protein] + ADP + H(+). Maintained in an inactive, closed conformation by an interaction between the kinase domain and the negative autoregulatory C-terminal coiled-coil region. Agonist binding to the phorbol ester binding site disrupts this, releasing the kinase domain to allow N-terminus-mediated dimerization and kinase activation by transautophosphorylation. Inhibited by chelerythrine chloride. In terms of biological role, serine/threonine-protein kinase which is an important downstream effector of CDC42 and plays a role in the regulation of cytoskeleton reorganization and cell migration. Regulates actin cytoskeletal reorganization via phosphorylation of PPP1R12C and MYL9/MLC2. In concert with MYO18A and LRP35A, is involved in modulating lamellar actomyosin retrograde flow that is crucial to cell protrusion and migration. Phosphorylates: PPP1R12A and LIMK2. May play a role in TFRC-mediated iron uptake. In concert with FAM89B/LRAP25 mediates the targeting of LIMK1 to the lamellipodium resulting in its activation and subsequent phosphorylation of CFL1 which is important for lamellipodial F-actin regulation. Triggers the formation of an extrusion apical actin ring required for epithelial extrusion of apoptotic cells. The protein is Serine/threonine-protein kinase MRCK alpha (Cdc42bpa) of Mus musculus (Mouse).